A 265-amino-acid chain; its full sequence is 5'-nucleotidase SurE (265 aa).

Positions 8, 9, 40, and 98 each coordinate a divalent metal cation.

The protein belongs to the SurE nucleotidase family. A divalent metal cation serves as cofactor.

Its subcellular location is the cytoplasm. The catalysed reaction is a ribonucleoside 5'-phosphate + H2O = a ribonucleoside + phosphate. Its function is as follows. Nucleotidase that shows phosphatase activity on nucleoside 5'-monophosphates. In Nostoc sp. (strain PCC 7120 / SAG 25.82 / UTEX 2576), this protein is 5'-nucleotidase SurE.